The following is a 346-amino-acid chain: Holliday junction branch migration complex subunit RuvB (346 aa).

The segment at 4–185 (SDRIITASPF…FGIVSRLEFY (182 aa)) is large ATPase domain (RuvB-L). ATP contacts are provided by residues L24, R25, G66, K69, T70, T71, 132–134 (EDY), R175, Y185, and R222. T70 contributes to the Mg(2+) binding site. Residues 186–256 (TSDELSKIVT…VADAALQMLD (71 aa)) are small ATPAse domain (RuvB-S). The segment at 259–346 (AAGLDVLDRK…AATPGLFNPD (88 aa)) is head domain (RuvB-H). DNA is bound by residues R295, R314, and R319.

It belongs to the RuvB family. In terms of assembly, homohexamer. Forms an RuvA(8)-RuvB(12)-Holliday junction (HJ) complex. HJ DNA is sandwiched between 2 RuvA tetramers; dsDNA enters through RuvA and exits via RuvB. An RuvB hexamer assembles on each DNA strand where it exits the tetramer. Each RuvB hexamer is contacted by two RuvA subunits (via domain III) on 2 adjacent RuvB subunits; this complex drives branch migration. In the full resolvosome a probable DNA-RuvA(4)-RuvB(12)-RuvC(2) complex forms which resolves the HJ.

It is found in the cytoplasm. It catalyses the reaction ATP + H2O = ADP + phosphate + H(+). Functionally, the RuvA-RuvB-RuvC complex processes Holliday junction (HJ) DNA during genetic recombination and DNA repair, while the RuvA-RuvB complex plays an important role in the rescue of blocked DNA replication forks via replication fork reversal (RFR). RuvA specifically binds to HJ cruciform DNA, conferring on it an open structure. The RuvB hexamer acts as an ATP-dependent pump, pulling dsDNA into and through the RuvAB complex. RuvB forms 2 homohexamers on either side of HJ DNA bound by 1 or 2 RuvA tetramers; 4 subunits per hexamer contact DNA at a time. Coordinated motions by a converter formed by DNA-disengaged RuvB subunits stimulates ATP hydrolysis and nucleotide exchange. Immobilization of the converter enables RuvB to convert the ATP-contained energy into a lever motion, pulling 2 nucleotides of DNA out of the RuvA tetramer per ATP hydrolyzed, thus driving DNA branch migration. The RuvB motors rotate together with the DNA substrate, which together with the progressing nucleotide cycle form the mechanistic basis for DNA recombination by continuous HJ branch migration. Branch migration allows RuvC to scan DNA until it finds its consensus sequence, where it cleaves and resolves cruciform DNA. This chain is Holliday junction branch migration complex subunit RuvB, found in Nitrosomonas eutropha (strain DSM 101675 / C91 / Nm57).